The following is a 404-amino-acid chain: Sulfate adenylyltransferase (404 aa).

Belongs to the sulfate adenylyltransferase family.

The catalysed reaction is sulfate + ATP + H(+) = adenosine 5'-phosphosulfate + diphosphate. It functions in the pathway sulfur metabolism; hydrogen sulfide biosynthesis; sulfite from sulfate: step 1/3. The protein is Sulfate adenylyltransferase of Chlorobaculum tepidum (strain ATCC 49652 / DSM 12025 / NBRC 103806 / TLS) (Chlorobium tepidum).